Reading from the N-terminus, the 411-residue chain is Serine--tRNA ligase (411 aa).

L-serine is bound at residue 226 to 228; that stretch reads TSE. 257 to 259 is an ATP binding site; that stretch reads RKE. Glu-280 lines the L-serine pocket. 344–347 provides a ligand contact to ATP; it reads EISS. Ser-379 contributes to the L-serine binding site.

This sequence belongs to the class-II aminoacyl-tRNA synthetase family. Type-1 seryl-tRNA synthetase subfamily. In terms of assembly, homodimer. The tRNA molecule binds across the dimer.

The protein localises to the cytoplasm. It catalyses the reaction tRNA(Ser) + L-serine + ATP = L-seryl-tRNA(Ser) + AMP + diphosphate + H(+). The catalysed reaction is tRNA(Sec) + L-serine + ATP = L-seryl-tRNA(Sec) + AMP + diphosphate + H(+). It participates in aminoacyl-tRNA biosynthesis; selenocysteinyl-tRNA(Sec) biosynthesis; L-seryl-tRNA(Sec) from L-serine and tRNA(Sec): step 1/1. Catalyzes the attachment of serine to tRNA(Ser). Is also able to aminoacylate tRNA(Sec) with serine, to form the misacylated tRNA L-seryl-tRNA(Sec), which will be further converted into selenocysteinyl-tRNA(Sec). The polypeptide is Serine--tRNA ligase (Campylobacter jejuni subsp. jejuni serotype O:23/36 (strain 81-176)).